Here is a 200-residue protein sequence, read N- to C-terminus: A-type ATP synthase subunit E (200 aa).

This sequence belongs to the V-ATPase E subunit family. In terms of assembly, has multiple subunits with at least A(3), B(3), C, D, E, F, H, I and proteolipid K(x).

Its subcellular location is the cell membrane. In terms of biological role, component of the A-type ATP synthase that produces ATP from ADP in the presence of a proton gradient across the membrane. In Methanopyrus kandleri (strain AV19 / DSM 6324 / JCM 9639 / NBRC 100938), this protein is A-type ATP synthase subunit E.